Reading from the N-terminus, the 326-residue chain is GDP-mannose transporter (326 aa).

Topologically, residues Met-1–Ser-4 are cytoplasmic. A helical transmembrane segment spans residues Ile-5–Val-25. Over Thr-26–Ser-35 the chain is Lumenal. The chain crosses the membrane as a helical span at residues Phe-36–Ile-56. The Cytoplasmic portion of the chain corresponds to Gly-57–Lys-74. Residues Lys-75–Leu-97 traverse the membrane as a helical segment. The Lumenal portion of the chain corresponds to Ser-98–Pro-100. Residues Val-101–Gly-123 form a helical membrane-spanning segment. The Cytoplasmic portion of the chain corresponds to Ser-124–Ala-129. Residues Leu-130–Ile-152 form a helical membrane-spanning segment. The Lumenal portion of the chain corresponds to Ala-153–Thr-163. A helical transmembrane segment spans residues Ala-164–Leu-184. Residues Tyr-185 to Ser-208 lie on the Cytoplasmic side of the membrane. The helical transmembrane segment at Ile-209–Val-229 threads the bilayer. Residues Asn-230–Asn-237 are Lumenal-facing. Residues Leu-238–Ala-258 traverse the membrane as a helical segment. Topologically, residues Trp-259–Thr-268 are cytoplasmic. A helical membrane pass occupies residues Tyr-269 to Gly-289. Topologically, residues Thr-290 to Pro-291 are lumenal. Residues Ala-292–Val-312 form a helical membrane-spanning segment. The Cytoplasmic segment spans residues Ala-313 to Lys-326.

The protein belongs to the TPT transporter family. SLC35D subfamily. Homooligomer.

The protein localises to the golgi apparatus membrane. The protein resides in the cytoplasmic vesicle membrane. It localises to the endoplasmic reticulum membrane. Functionally, involved in the import of GDP-mannose from the cytoplasm into the Golgi lumen. The sequence is that of GDP-mannose transporter (VRG4) from Yarrowia lipolytica (strain CLIB 122 / E 150) (Yeast).